The primary structure comprises 270 residues: Putative pyruvate, phosphate dikinase regulatory protein (270 aa).

153 to 160 contacts ADP; sequence GVSRTSKT.

The protein belongs to the pyruvate, phosphate/water dikinase regulatory protein family. PDRP subfamily.

It carries out the reaction N(tele)-phospho-L-histidyl/L-threonyl-[pyruvate, phosphate dikinase] + ADP = N(tele)-phospho-L-histidyl/O-phospho-L-threonyl-[pyruvate, phosphate dikinase] + AMP + H(+). The enzyme catalyses N(tele)-phospho-L-histidyl/O-phospho-L-threonyl-[pyruvate, phosphate dikinase] + phosphate + H(+) = N(tele)-phospho-L-histidyl/L-threonyl-[pyruvate, phosphate dikinase] + diphosphate. In terms of biological role, bifunctional serine/threonine kinase and phosphorylase involved in the regulation of the pyruvate, phosphate dikinase (PPDK) by catalyzing its phosphorylation/dephosphorylation. This chain is Putative pyruvate, phosphate dikinase regulatory protein, found in Halalkalibacterium halodurans (strain ATCC BAA-125 / DSM 18197 / FERM 7344 / JCM 9153 / C-125) (Bacillus halodurans).